The chain runs to 201 residues: L(+)-tartrate dehydratase subunit beta (201 aa).

The active site involves H37.

The protein belongs to the class-I fumarase family. Heterotetramer of two alpha and two beta subunits.

The enzyme catalyses (2R,3R)-tartrate = oxaloacetate + H2O. In Escherichia coli O6:K15:H31 (strain 536 / UPEC), this protein is L(+)-tartrate dehydratase subunit beta (ttdB).